Here is a 480-residue protein sequence, read N- to C-terminus: Aspartyl/glutamyl-tRNA(Asn/Gln) amidotransferase subunit B (480 aa).

Belongs to the GatB/GatE family. GatB subfamily. As to quaternary structure, heterotrimer of A, B and C subunits.

The enzyme catalyses L-glutamyl-tRNA(Gln) + L-glutamine + ATP + H2O = L-glutaminyl-tRNA(Gln) + L-glutamate + ADP + phosphate + H(+). It carries out the reaction L-aspartyl-tRNA(Asn) + L-glutamine + ATP + H2O = L-asparaginyl-tRNA(Asn) + L-glutamate + ADP + phosphate + 2 H(+). Its function is as follows. Allows the formation of correctly charged Asn-tRNA(Asn) or Gln-tRNA(Gln) through the transamidation of misacylated Asp-tRNA(Asn) or Glu-tRNA(Gln) in organisms which lack either or both of asparaginyl-tRNA or glutaminyl-tRNA synthetases. The reaction takes place in the presence of glutamine and ATP through an activated phospho-Asp-tRNA(Asn) or phospho-Glu-tRNA(Gln). The polypeptide is Aspartyl/glutamyl-tRNA(Asn/Gln) amidotransferase subunit B (Streptococcus pneumoniae (strain P1031)).